Here is a 212-residue protein sequence, read N- to C-terminus: Pyridoxine/pyridoxamine 5'-phosphate oxidase (212 aa).

Substrate contacts are provided by residues arginine 8–tyrosine 11 and lysine 66. Residues arginine 61–lysine 66, phenylalanine 76–threonine 77, arginine 82, lysine 83, and glutamine 105 each bind FMN. 3 residues coordinate substrate: tyrosine 123, arginine 127, and serine 131. FMN is bound by residues glutamine 140 to serine 141 and tryptophan 184. Arginine 190–histidine 192 is a binding site for substrate. Arginine 194 lines the FMN pocket.

Belongs to the pyridoxamine 5'-phosphate oxidase family. Homodimer. FMN serves as cofactor.

The catalysed reaction is pyridoxamine 5'-phosphate + O2 + H2O = pyridoxal 5'-phosphate + H2O2 + NH4(+). It carries out the reaction pyridoxine 5'-phosphate + O2 = pyridoxal 5'-phosphate + H2O2. It participates in cofactor metabolism; pyridoxal 5'-phosphate salvage; pyridoxal 5'-phosphate from pyridoxamine 5'-phosphate: step 1/1. The protein operates within cofactor metabolism; pyridoxal 5'-phosphate salvage; pyridoxal 5'-phosphate from pyridoxine 5'-phosphate: step 1/1. Catalyzes the oxidation of either pyridoxine 5'-phosphate (PNP) or pyridoxamine 5'-phosphate (PMP) into pyridoxal 5'-phosphate (PLP). The chain is Pyridoxine/pyridoxamine 5'-phosphate oxidase from Cupriavidus pinatubonensis (strain JMP 134 / LMG 1197) (Cupriavidus necator (strain JMP 134)).